The primary structure comprises 361 residues: Protein RecA (361 aa).

68 to 75 (GPESSGKT) is an ATP binding site. The segment at 342–361 (PEGAKENISAKDDVAVDTKE) is disordered. A compositionally biased stretch (basic and acidic residues) spans 344–361 (GAKENISAKDDVAVDTKE).

This sequence belongs to the RecA family.

The protein localises to the cytoplasm. Can catalyze the hydrolysis of ATP in the presence of single-stranded DNA, the ATP-dependent uptake of single-stranded DNA by duplex DNA, and the ATP-dependent hybridization of homologous single-stranded DNAs. It interacts with LexA causing its activation and leading to its autocatalytic cleavage. The chain is Protein RecA from Clostridium beijerinckii (strain ATCC 51743 / NCIMB 8052) (Clostridium acetobutylicum).